Here is a 224-residue protein sequence, read N- to C-terminus: Propanediol dehydratase medium subunit (224 aa).

The segment at 1-18 (MEINEKLLRQIIEDVLSE) is targets protein to the BMC.

This sequence belongs to the diol/glycerol dehydratase medium subunit family. The propanediol dehydratase enzyme is a heterotrimeric complex composed of a large (PduC), a medium (PduD) and a small (PduE) subunit. Requires adenosylcob(III)alamin as cofactor.

The protein resides in the bacterial microcompartment. It catalyses the reaction propane-1,2-diol = propanal + H2O. It functions in the pathway polyol metabolism; 1,2-propanediol degradation. Part of the PduCDE complex that catalyzes the dehydration of 1,2-propanediol (1,2-PD) to propionaldehyde. This subunit is directly targeted to the bacterial microcompartment (BMC). Its function is as follows. Expression of a cosmid containing the full 21-gene pdu operon in E.coli allows E.coli to grow on 1,2-propanediol (1,2-PD) with the appearance of BMCs in its cytoplasm. In terms of biological role, the 1,2-PD-specific bacterial microcompartment (BMC) concentrates low levels of 1,2-PD catabolic enzymes, concentrates volatile reaction intermediates thus enhancing pathway flux and keeps the level of toxic, mutagenic propionaldehyde low. The sequence is that of Propanediol dehydratase medium subunit from Citrobacter freundii.